The chain runs to 270 residues: uncharacterized protein (270 aa).

To T.pallidum TP_0127, TP_0315 and TP_0618.

This is an uncharacterized protein from Treponema pallidum (strain Nichols).